The primary structure comprises 372 residues: UDP-N-acetylglucosamine--N-acetylmuramyl-(pentapeptide) pyrophosphoryl-undecaprenol N-acetylglucosamine transferase (372 aa).

UDP-N-acetyl-alpha-D-glucosamine-binding positions include 16-18 (TGG), N128, R164, S192, I250, and Q295.

This sequence belongs to the glycosyltransferase 28 family. MurG subfamily.

Its subcellular location is the cell inner membrane. The catalysed reaction is di-trans,octa-cis-undecaprenyl diphospho-N-acetyl-alpha-D-muramoyl-L-alanyl-D-glutamyl-meso-2,6-diaminopimeloyl-D-alanyl-D-alanine + UDP-N-acetyl-alpha-D-glucosamine = di-trans,octa-cis-undecaprenyl diphospho-[N-acetyl-alpha-D-glucosaminyl-(1-&gt;4)]-N-acetyl-alpha-D-muramoyl-L-alanyl-D-glutamyl-meso-2,6-diaminopimeloyl-D-alanyl-D-alanine + UDP + H(+). It participates in cell wall biogenesis; peptidoglycan biosynthesis. In terms of biological role, cell wall formation. Catalyzes the transfer of a GlcNAc subunit on undecaprenyl-pyrophosphoryl-MurNAc-pentapeptide (lipid intermediate I) to form undecaprenyl-pyrophosphoryl-MurNAc-(pentapeptide)GlcNAc (lipid intermediate II). The sequence is that of UDP-N-acetylglucosamine--N-acetylmuramyl-(pentapeptide) pyrophosphoryl-undecaprenol N-acetylglucosamine transferase from Paraburkholderia phytofirmans (strain DSM 17436 / LMG 22146 / PsJN) (Burkholderia phytofirmans).